A 153-amino-acid polypeptide reads, in one-letter code: Putative riboflavin kinase (153 aa).

Mg(2+) contacts are provided by threonine 28 and asparagine 30. Glutamate 80 acts as the Nucleophile in catalysis.

As to quaternary structure, monomer. It depends on Zn(2+) as a cofactor. Mg(2+) serves as cofactor.

It is found in the cytoplasm. It carries out the reaction riboflavin + ATP = FMN + ADP + H(+). It participates in cofactor biosynthesis; FMN biosynthesis; FMN from riboflavin (ATP route): step 1/1. Its function is as follows. Catalyzes the phosphorylation of riboflavin (vitamin B2) to form flavin-mononucleotide (FMN). The polypeptide is Putative riboflavin kinase (Drosophila melanogaster (Fruit fly)).